The sequence spans 477 residues: Glutamyl-tRNA reductase (477 aa).

Substrate is bound by residues 49–52 (TCNR), Ser-109, 114–116 (EQQ), and Gln-120. Catalysis depends on Cys-50, which acts as the Nucleophile. NADP(+) is bound at residue 189 to 194 (GAGAMG).

It belongs to the glutamyl-tRNA reductase family. In terms of assembly, homodimer.

The catalysed reaction is (S)-4-amino-5-oxopentanoate + tRNA(Glu) + NADP(+) = L-glutamyl-tRNA(Glu) + NADPH + H(+). The protein operates within porphyrin-containing compound metabolism; protoporphyrin-IX biosynthesis; 5-aminolevulinate from L-glutamyl-tRNA(Glu): step 1/2. Its function is as follows. Catalyzes the NADPH-dependent reduction of glutamyl-tRNA(Glu) to glutamate 1-semialdehyde (GSA). This is Glutamyl-tRNA reductase from Nocardia farcinica (strain IFM 10152).